A 359-amino-acid polypeptide reads, in one-letter code: MPPLPLITAQTEEKLLAFLTEHGHTKFRTQQVLDWVWRKRVTTFDAMSNLPPALKNLLAENFRFHTPEIVEIHGSADTTRKFLTKMEDGSLVESVIIPAAAAENGEKSERVTLCVSSQVGCAFGCKFCASGLLGLKRHLTTGEIIGQILSAEAIAGKRVNNIVFMGMGEPLSNFDNLADALEIITSHRGLEIGARHITISTSGFVPGLKKLAAYPRQIRLAVSLHGATDEVRDQIMPVNKKWPLSQLIPALEEWNRGRNQMPTLEYILIRDINDSPKDASHLVRIAKRLHAKVNLIPYNTVEGLPWKRPSEERCRSFRDAVHKARIPVTMRYEKGHDINAACGQLRLRKEQEKSGKTSR.

Glutamate 93 functions as the Proton acceptor in the catalytic mechanism. In terms of domain architecture, Radical SAM core spans lysine 107–aspartate 337. An intrachain disulfide couples cysteine 114 to cysteine 342. Residues cysteine 121, cysteine 125, and cysteine 128 each coordinate [4Fe-4S] cluster. S-adenosyl-L-methionine contacts are provided by residues glycine 168–glutamate 169, serine 200, serine 223–histidine 225, and asparagine 299. Residue cysteine 342 is the S-methylcysteine intermediate of the active site.

This sequence belongs to the radical SAM superfamily. RlmN family. [4Fe-4S] cluster is required as a cofactor.

Its subcellular location is the cytoplasm. It carries out the reaction adenosine(2503) in 23S rRNA + 2 reduced [2Fe-2S]-[ferredoxin] + 2 S-adenosyl-L-methionine = 2-methyladenosine(2503) in 23S rRNA + 5'-deoxyadenosine + L-methionine + 2 oxidized [2Fe-2S]-[ferredoxin] + S-adenosyl-L-homocysteine. It catalyses the reaction adenosine(37) in tRNA + 2 reduced [2Fe-2S]-[ferredoxin] + 2 S-adenosyl-L-methionine = 2-methyladenosine(37) in tRNA + 5'-deoxyadenosine + L-methionine + 2 oxidized [2Fe-2S]-[ferredoxin] + S-adenosyl-L-homocysteine. Its function is as follows. Specifically methylates position 2 of adenine 2503 in 23S rRNA and position 2 of adenine 37 in tRNAs. This is Probable dual-specificity RNA methyltransferase RlmN from Akkermansia muciniphila (strain ATCC BAA-835 / DSM 22959 / JCM 33894 / BCRC 81048 / CCUG 64013 / CIP 107961 / Muc).